The following is a 1528-amino-acid chain: 5'-3' exoribonuclease 1 (1528 aa).

Disordered regions lie at residues 1246–1331 (SKKA…KSSE), 1431–1455 (PPPA…NVSD), and 1470–1528 (LKKF…DEST). Residues 1274-1304 (QSEEKLRKERAHDLLNFIKKDTNEKNSESVD) show a composition bias toward basic and acidic residues. Positions 1317 to 1326 (AKKVLLKRPA) are enriched in basic residues. A compositionally biased stretch (polar residues) spans 1500–1517 (SSGTNSTECQSPKSQSNA). Thr1506 carries the phosphothreonine modification. At Ser1510 the chain carries Phosphoserine. The segment covering 1518–1528 (ADRDNKKDEST) has biased composition (basic and acidic residues).

It belongs to the 5'-3' exonuclease family. Mg(2+) is required as a cofactor.

It localises to the cytoplasm. The protein resides in the perinuclear region. Its subcellular location is the P-body. With respect to regulation, 3'-phosphoadenosine 5'-phosphate (pAp) is an inhibitor of KEM1. Sodium-induced GCN4 expression reduces pAp accumulation by activating HAL2 expression, and therefore maintains mRNA degradation capacity which is likely to be important for the accurate and rapid adaptation of gene expression to salt stress. Multifunctional protein that exhibits several independent functions at different levels of the cellular processes. 5'-3' exonuclease component of the nonsense-mediated mRNA decay (NMD) which is a highly conserved mRNA degradation pathway, an RNA surveillance system whose role is to identify and rid cells of mRNA with premature termination codons and thus prevents accumulation of potentially harmful truncated proteins. The NMD pathway has a second role regulating the decay of wild-type mRNAs, and especially mRNAs that are important for telomere functions. Participate in CTH2-mediated and VTS1-mediated mRNA turnover. Involved in the degradation of several hypomodified mature tRNA species and participates in the 5'-processing or the degradation of the snoRNA precursors and rRNA processing. Involved in defense against virus and suppresses viral RNA recombination by rapidly removing the 5'-truncated RNAs, the substrates of recombination, and thus reducing the chance for recombination to occur in the parental strain. Required for the assembly of the virus-like particles of the Ty3 retrotransposon and contributes to the efficient generation of narnavirus 20S RNA by playing a major role in the elimination of the non-viral upstream sequences from the primary transcripts. Degrades single-stranded DNA (ss-DNA) and can renature complementary ss-DNA as well as catalyzes the formation of heteroduplex DNA from circular ss-DNA and homologous linear ds-DNA in vitro. Acts as a microtubule-associated protein which interacts with cytoplasmic microtubules through beta-tubulin and promotes in vitro assembly of tubulin into microtubules. Associates with microtubule functions such as chromosome transmission, nuclear migration, and SPB duplication. Has also a role in G1 to S transition and is involved in nuclear fusion during karyogamy. Required for the expression of ROK1 at the post-transcriptional level and for the alpha-factor induction of the karyogamy genes KAR3 and KAR4. Plays a role in filamentous growth. This Saccharomyces cerevisiae (strain ATCC 204508 / S288c) (Baker's yeast) protein is 5'-3' exoribonuclease 1 (XRN1).